The following is a 62-amino-acid chain: Photosystem II reaction center protein K (62 aa).

A propeptide spanning residues 1–25 (MPNILSLTCICFNSVLYPTTSFFFA) is cleaved from the precursor. Residues 33 to 53 (IFNPIVDVMPVIPLFFFLLAF) form a helical membrane-spanning segment.

It belongs to the PsbK family. PSII is composed of 1 copy each of membrane proteins PsbA, PsbB, PsbC, PsbD, PsbE, PsbF, PsbH, PsbI, PsbJ, PsbK, PsbL, PsbM, PsbT, PsbX, PsbY, PsbZ, Psb30/Ycf12, at least 3 peripheral proteins of the oxygen-evolving complex and a large number of cofactors. It forms dimeric complexes.

It localises to the plastid. Its subcellular location is the chloroplast thylakoid membrane. Its function is as follows. One of the components of the core complex of photosystem II (PSII). PSII is a light-driven water:plastoquinone oxidoreductase that uses light energy to abstract electrons from H(2)O, generating O(2) and a proton gradient subsequently used for ATP formation. It consists of a core antenna complex that captures photons, and an electron transfer chain that converts photonic excitation into a charge separation. This chain is Photosystem II reaction center protein K, found in Agrostis stolonifera (Creeping bentgrass).